We begin with the raw amino-acid sequence, 439 residues long: MTDIFEKCKRTHYSNEIGPELAGETVKVTGWVHEIRDLGGIVFVLIRDKNGITQLTAPSKKLSEEMMADVRAARKETIITLTGTVQESAKAPNGVEIIPSNIDVINVSQLPLPLDTTEKVEAEMDTRLDSRFMDLRKHDVSAIFKIKSQMLHTARNYFYDNDFTEITTPKLVASATEGGTELFPITYFEKEAFLGQSPQLYKQMMMATGLDNVFEIGQIFRAEEHDTLRHLNEALSIDAEMSFKSQTDAMNTLEELIKRILSDISTNCQKELSDLDHELDIPTEPFPIVTYEEVIDIVNSRDVEMNYGEDLNRAAEKVLGETMGSYYFITEWPTAIKPFYVMPNSDDAEKSTAFDLMYRDLELSSGAQRIHDYDLLYSQIEAKDLNPDSFEKYLQAFKYGMPPHSGWGMGADRLTMVITGAKNIRETVLFPRDRRRLTP.

Residue glutamate 177 participates in L-aspartate binding. Residues 199–202 (QLYK) form an aspartate region. Arginine 221 is a binding site for L-aspartate. Residues 221–223 (RAE), 229–231 (RHL), and glutamate 362 contribute to the ATP site. Mg(2+) contacts are provided by glutamate 362 and serine 365. 2 residues coordinate L-aspartate: serine 365 and arginine 369. Residue 410–413 (GADR) coordinates ATP.

It belongs to the class-II aminoacyl-tRNA synthetase family. Type 2 subfamily. Homodimer. Requires Mg(2+) as cofactor.

The protein localises to the cytoplasm. The enzyme catalyses tRNA(Asx) + L-aspartate + ATP = L-aspartyl-tRNA(Asx) + AMP + diphosphate. Aspartyl-tRNA synthetase with relaxed tRNA specificity since it is able to aspartylate not only its cognate tRNA(Asp) but also tRNA(Asn). Reaction proceeds in two steps: L-aspartate is first activated by ATP to form Asp-AMP and then transferred to the acceptor end of tRNA(Asp/Asn). This Methanosphaera stadtmanae (strain ATCC 43021 / DSM 3091 / JCM 11832 / MCB-3) protein is Aspartate--tRNA(Asp/Asn) ligase.